A 453-amino-acid polypeptide reads, in one-letter code: UDP-glycosyltransferase 76E9 (453 aa).

Residues Ser279, 337–339, 354–362, and 376–379 contribute to the UDP-alpha-D-glucose site; these read APQ, HCGWNSTLE, and TTDQ.

The protein belongs to the UDP-glycosyltransferase family.

This Arabidopsis thaliana (Mouse-ear cress) protein is UDP-glycosyltransferase 76E9 (UGT76E9).